We begin with the raw amino-acid sequence, 260 residues long: Indole-3-glycerol phosphate synthase (260 aa).

It belongs to the TrpC family.

It carries out the reaction 1-(2-carboxyphenylamino)-1-deoxy-D-ribulose 5-phosphate + H(+) = (1S,2R)-1-C-(indol-3-yl)glycerol 3-phosphate + CO2 + H2O. Its pathway is amino-acid biosynthesis; L-tryptophan biosynthesis; L-tryptophan from chorismate: step 4/5. This Nocardioides sp. (strain ATCC BAA-499 / JS614) protein is Indole-3-glycerol phosphate synthase.